Here is a 359-residue protein sequence, read N- to C-terminus: Protein trichome birefringence-like 42 (359 aa).

Residues Leu7–Ala25 traverse the membrane as a helical; Signal-anchor for type II membrane protein segment. The short motif at Gly110–Ser112 is the GDS motif element. Positions Asp335–Asn349 match the DCXHWCLPGXXDXWN motif motif.

The protein belongs to the PC-esterase family. TBL subfamily.

It localises to the membrane. Its function is as follows. May act as a bridging protein that binds pectin and other cell wall polysaccharides. Probably involved in maintaining esterification of pectins. May be involved in the specific O-acetylation of cell wall polymers. This is Protein trichome birefringence-like 42 (TBL42) from Arabidopsis thaliana (Mouse-ear cress).